The sequence spans 297 residues: tRNA (guanine-N(7)-)-methyltransferase (297 aa).

The S-adenosyl-L-methionine site is built by Glu-22, Glu-47, Asp-74, and Asp-97. The active site involves Asp-97. Substrate contacts are provided by residues Lys-101, Asp-133, and Thr-165 to Glu-168.

The protein belongs to the class I-like SAM-binding methyltransferase superfamily. TrmB family.

It carries out the reaction guanosine(46) in tRNA + S-adenosyl-L-methionine = N(7)-methylguanosine(46) in tRNA + S-adenosyl-L-homocysteine. The protein operates within tRNA modification; N(7)-methylguanine-tRNA biosynthesis. In terms of biological role, catalyzes the formation of N(7)-methylguanine at position 46 (m7G46) in tRNA. This chain is tRNA (guanine-N(7)-)-methyltransferase, found in Aquifex aeolicus (strain VF5).